Here is a 165-residue protein sequence, read N- to C-terminus: uncharacterized protein (165 aa).

The 152-residue stretch at 8 to 159 (LLVNYKTLEE…QGVQEQTTKP (152 aa)) folds into the N-acetyltransferase domain.

This is an uncharacterized protein from Shouchella clausii (strain KSM-K16) (Alkalihalobacillus clausii).